A 94-amino-acid chain; its full sequence is Putative regulatory protein THA_332 (94 aa).

Belongs to the RemA family.

The protein is Putative regulatory protein THA_332 of Thermosipho africanus (strain TCF52B).